Here is a 1247-residue protein sequence, read N- to C-terminus: Respiratory nitrate reductase 1 alpha chain (1247 aa).

Residues 43-107 (DKIVRSTHGV…SYSWYLYSAN (65 aa)) form the 4Fe-4S Mo/W bis-MGD-type domain. [4Fe-4S] cluster contacts are provided by His50, Cys54, Cys58, and Cys93. Mo-bis(molybdopterin guanine dinucleotide) is bound at residue Asp223.

Belongs to the prokaryotic molybdopterin-containing oxidoreductase family. Dimer of heterotrimers each composed of an alpha, a beta and a gamma chain. Alpha and beta are catalytic chains; gamma chains are involved in binding the enzyme complex to the cytoplasmic membrane. Interacts with the NarJ chaperone. [4Fe-4S] cluster is required as a cofactor. Mo-bis(molybdopterin guanine dinucleotide) serves as cofactor.

It is found in the cell membrane. The enzyme catalyses nitrate + a quinol = a quinone + nitrite + H2O. Functionally, the nitrate reductase enzyme complex allows E.coli to use nitrate as an electron acceptor during anaerobic growth. The alpha chain is the actual site of nitrate reduction. The polypeptide is Respiratory nitrate reductase 1 alpha chain (narG) (Escherichia coli (strain K12)).